A 218-amino-acid chain; its full sequence is Large ribosomal subunit protein bL25 (218 aa).

Residues 185–218 (ARAAEEEAPAAEETTAEPELVRERREPRAEEEEE) form a disordered region. Acidic residues predominate over residues 190–200 (EEAPAAEETTA). The span at 203-212 (ELVRERREPR) shows a compositional bias: basic and acidic residues.

The protein belongs to the bacterial ribosomal protein bL25 family. CTC subfamily. In terms of assembly, part of the 50S ribosomal subunit; part of the 5S rRNA/L5/L18/L25 subcomplex. Contacts the 5S rRNA. Binds to the 5S rRNA independently of L5 and L18.

Its function is as follows. This is one of the proteins that binds to the 5S RNA in the ribosome where it forms part of the central protuberance. The protein is Large ribosomal subunit protein bL25 of Roseiflexus castenholzii (strain DSM 13941 / HLO8).